The primary structure comprises 359 residues: Glycerol-1-phosphate dehydrogenase [NAD(P)+] (359 aa).

NAD(+) is bound by residues Gly-107–Asp-111 and Thr-129–Ser-132. Asp-134 is a substrate binding site. Ser-138 contacts NAD(+). Asp-181 is a substrate binding site. Zn(2+) is bound by residues Asp-181 and His-261. His-265 serves as a coordination point for substrate. A Zn(2+)-binding site is contributed by His-277.

The protein belongs to the glycerol-1-phosphate dehydrogenase family. Zn(2+) serves as cofactor.

Its subcellular location is the cytoplasm. It catalyses the reaction sn-glycerol 1-phosphate + NAD(+) = dihydroxyacetone phosphate + NADH + H(+). It carries out the reaction sn-glycerol 1-phosphate + NADP(+) = dihydroxyacetone phosphate + NADPH + H(+). The protein operates within membrane lipid metabolism; glycerophospholipid metabolism. Its function is as follows. Catalyzes the NAD(P)H-dependent reduction of dihydroxyacetonephosphate (DHAP or glycerone phosphate) to glycerol 1-phosphate (G1P). The G1P thus generated is used as the glycerophosphate backbone of phospholipids in the cellular membranes of Archaea. In Methanosphaerula palustris (strain ATCC BAA-1556 / DSM 19958 / E1-9c), this protein is Glycerol-1-phosphate dehydrogenase [NAD(P)+].